Consider the following 218-residue polypeptide: Uracil-DNA glycosylase (218 aa).

Aspartate 60 functions as the Proton acceptor in the catalytic mechanism.

Belongs to the uracil-DNA glycosylase (UDG) superfamily. UNG family.

It is found in the cytoplasm. It catalyses the reaction Hydrolyzes single-stranded DNA or mismatched double-stranded DNA and polynucleotides, releasing free uracil.. Its function is as follows. Excises uracil residues from the DNA which can arise as a result of misincorporation of dUMP residues by DNA polymerase or due to deamination of cytosine. The sequence is that of Uracil-DNA glycosylase from Shewanella oneidensis (strain ATCC 700550 / JCM 31522 / CIP 106686 / LMG 19005 / NCIMB 14063 / MR-1).